A 207-amino-acid chain; its full sequence is LexA repressor (207 aa).

The segment at residues 28–48 (VREIGEAVGLASSSTVHGHLA) is a DNA-binding region (H-T-H motif). Active-site for autocatalytic cleavage activity residues include Ser129 and Lys167.

Belongs to the peptidase S24 family. Homodimer.

The catalysed reaction is Hydrolysis of Ala-|-Gly bond in repressor LexA.. In terms of biological role, represses a number of genes involved in the response to DNA damage (SOS response), including recA and lexA. In the presence of single-stranded DNA, RecA interacts with LexA causing an autocatalytic cleavage which disrupts the DNA-binding part of LexA, leading to derepression of the SOS regulon and eventually DNA repair. This Geobacillus kaustophilus (strain HTA426) protein is LexA repressor.